Reading from the N-terminus, the 821-residue chain is TORTIFOLIA1-like protein 1 (821 aa).

HEAT repeat units follow at residues 69 to 110 (PDSP…SYTD), 114 to 151 (SQLA…QFLK), 163 to 201 (SSLV…SATE), 205 to 242 (AAFQ…VGAI), and 245 to 282 (QSLE…HSSS). Ser-406 carries the phosphoserine modification. Disordered stretches follow at residues 416 to 437 (PSRQ…NTSV) and 553 to 610 (MSIQ…RAWD). The stretch at 501-554 (PPLQRQLLHLERQQTHIMNMLQDFMGGSHDGMISLENRVRGLERIVEEMSREMS) forms a coiled coil. The segment covering 579 to 590 (YGPSSRNTQTST) has biased composition (polar residues).

As to expression, expressed at low levels in roots, hypocotyls, stems, flowers, siliques, cotyledons, and leaves. Particularly present in hydathodes of cotyledons and root hairs.

It localises to the cytoplasm. It is found in the cytoskeleton. Its function is as follows. Plant-specific microtubule-associated protein (MAP) that regulates the orientation of cortical microtubules and the direction of organ growth. This Arabidopsis thaliana (Mouse-ear cress) protein is TORTIFOLIA1-like protein 1.